A 539-amino-acid polypeptide reads, in one-letter code: Phosphoenolpyruvate carboxykinase (ATP) (539 aa).

The substrate site is built by Arg-64, Tyr-206, and Lys-212. Residues Lys-212, His-231, and 247–255 (GLSGTGKTT) contribute to the ATP site. Residues Lys-212 and His-231 each coordinate Mn(2+). Position 268 (Asp-268) interacts with Mn(2+). ATP is bound by residues Glu-296, Arg-332, 448 to 449 (RI), and Thr-454. Arg-332 provides a ligand contact to substrate.

The protein belongs to the phosphoenolpyruvate carboxykinase (ATP) family. As to quaternary structure, monomer. It depends on Mn(2+) as a cofactor.

The protein resides in the cytoplasm. The enzyme catalyses oxaloacetate + ATP = phosphoenolpyruvate + ADP + CO2. It participates in carbohydrate biosynthesis; gluconeogenesis. Functionally, involved in the gluconeogenesis. Catalyzes the conversion of oxaloacetate (OAA) to phosphoenolpyruvate (PEP) through direct phosphoryl transfer between the nucleoside triphosphate and OAA. This is Phosphoenolpyruvate carboxykinase (ATP) from Pectobacterium atrosepticum (strain SCRI 1043 / ATCC BAA-672) (Erwinia carotovora subsp. atroseptica).